Here is a 157-residue protein sequence, read N- to C-terminus: Transcriptional repressor NrdR (157 aa).

Residues 3–34 (CPFCNAEDTKVIDSRLVEEGTQVRRRRECLKC) fold into a zinc finger. Residues 49–139 (PRIIKRDGRR…VYRSFQDINA (91 aa)) enclose the ATP-cone domain.

This sequence belongs to the NrdR family. The cofactor is Zn(2+).

Functionally, negatively regulates transcription of bacterial ribonucleotide reductase nrd genes and operons by binding to NrdR-boxes. The protein is Transcriptional repressor NrdR of Coxiella burnetii (strain CbuK_Q154) (Coxiella burnetii (strain Q154)).